A 250-amino-acid polypeptide reads, in one-letter code: Triosephosphate isomerase (250 aa).

9–11 lines the substrate pocket; sequence NWK. Residue His96 is the Electrophile of the active site. The active-site Proton acceptor is the Glu168. Substrate is bound by residues Gly174, Ser216, and 237–238; that span reads GG.

This sequence belongs to the triosephosphate isomerase family. As to quaternary structure, homodimer.

It is found in the cytoplasm. It carries out the reaction D-glyceraldehyde 3-phosphate = dihydroxyacetone phosphate. It functions in the pathway carbohydrate biosynthesis; gluconeogenesis. Its pathway is carbohydrate degradation; glycolysis; D-glyceraldehyde 3-phosphate from glycerone phosphate: step 1/1. Functionally, involved in the gluconeogenesis. Catalyzes stereospecifically the conversion of dihydroxyacetone phosphate (DHAP) to D-glyceraldehyde-3-phosphate (G3P). In Leptospira borgpetersenii serovar Hardjo-bovis (strain JB197), this protein is Triosephosphate isomerase.